Reading from the N-terminus, the 663-residue chain is Dual specificity protein phosphatase 8 (663 aa).

In terms of domain architecture, Rhodanese spans 23–138; it reads GPGGPLVIDS…FSSCFPGLCE (116 aa). Positions 160 to 302 constitute a Tyrosine-protein phosphatase domain; sequence GLTRILPHLY…LLEYERSLKL (143 aa). The active-site Phosphocysteine intermediate is the Cys246. 2 disordered regions span residues 313-367 and 404-624; these read LGTP…STAP and YAPS…FKRR. 3 stretches are compositionally biased toward low complexity: residues 334 to 353, 427 to 448, and 546 to 557; these read STSE…REGS, LDSP…PDSV, and SAGAPGPGNSSS. The span at 558–577 shows a compositional bias: gly residues; the sequence is SGGGGGGGGGGGGGGGGGGS. A compositionally biased stretch (low complexity) spans 578–600; the sequence is SSSNSSSSSSSSSSSSSSSSSSS.

The protein belongs to the protein-tyrosine phosphatase family. Non-receptor class dual specificity subfamily. In terms of assembly, monomer. Expressed predominantly in brain and lung.

It is found in the cytoplasm. The protein resides in the nucleus. The enzyme catalyses O-phospho-L-tyrosyl-[protein] + H2O = L-tyrosyl-[protein] + phosphate. It carries out the reaction O-phospho-L-seryl-[protein] + H2O = L-seryl-[protein] + phosphate. It catalyses the reaction O-phospho-L-threonyl-[protein] + H2O = L-threonyl-[protein] + phosphate. Its function is as follows. Has phosphatase activity with synthetic phosphatase substrates and negatively regulates mitogen-activated protein kinase activity, presumably by catalysing their dephosphorylation. Expected to display protein phosphatase activity toward phosphotyrosine, phosphoserine and phosphothreonine residues. The sequence is that of Dual specificity protein phosphatase 8 (Dusp8) from Mus musculus (Mouse).